Here is a 138-residue protein sequence, read N- to C-terminus: Venom allergen 2 (138 aa).

An N-terminal signal peptide occupies residues 1–19; that stretch reads MKSFVLATCLLGFAQIIYA.

Belongs to the ant venom allergen 2/4 family. In terms of assembly, homodimer; disulfide-linked. In terms of tissue distribution, expressed by the venom gland.

The protein localises to the secreted. The protein is Venom allergen 2 of Solenopsis saevissima (Fire ant).